The chain runs to 442 residues: MSENVYLNEALNVVDQCFKTFFDKYTDRMGSAFACSGTIDKDHIFLVWSVAVYAEAMADSLRYTSKFERKFEHVFQALKKYWSPVFNACCAFHYFEGNDDVYYDDNAQVAIGLATAGYYTTNSSRRDHYVSRAESIISLIINKGWNQQRGGIAWHTRTTGPPWTNLNACSTSMSAVAALRLALALDDPNKKQHLVSFAWNCVRWIQENLLDENHIVCDGLSLKDGKWVLDKARFTYNTGTTMTAMSLLMGLGEFTKGLQDIEKLPTYLEDMARGALDTNGPLYDQSCNGSFKVWSDNTFFAQHLSEGLMTFSYAMPSSALAKPAQKMVLDQADFLMKYLRIPKEGLYYRNFGLYKLSPELTASFNKFFNANKQFQPDKDERIQQEGPVEQRPLCPTLIGSAGAARMLFSAAEIVNRNNPSSGESTTLPQPSHGKKDKDCVIS.

The residue at position 361 (threonine 361) is a Phosphothreonine. A compositionally biased stretch (polar residues) spans 416–429 (RNNPSSGESTTLPQ). Residues 416–442 (RNNPSSGESTTLPQPSHGKKDKDCVIS) are disordered. Over residues 433-442 (GKKDKDCVIS) the composition is skewed to basic and acidic residues.

The protein localises to the cytoplasm. It is found in the nucleus. Functionally, has a role in meiosis. This chain is Meiotically up-regulated gene 191 protein (mug191), found in Schizosaccharomyces pombe (strain 972 / ATCC 24843) (Fission yeast).